The chain runs to 237 residues: Uridylate kinase (237 aa).

10–13 serves as a coordination point for ATP; sequence KLSG. Glycine 52 provides a ligand contact to UMP. Glycine 53 and arginine 57 together coordinate ATP. UMP is bound by residues aspartate 72 and 133-140; that span reads TGNPFFTT. ATP-binding residues include threonine 160, tyrosine 166, and aspartate 169.

It belongs to the UMP kinase family. In terms of assembly, homohexamer.

It is found in the cytoplasm. It carries out the reaction UMP + ATP = UDP + ADP. It participates in pyrimidine metabolism; CTP biosynthesis via de novo pathway; UDP from UMP (UMPK route): step 1/1. Its activity is regulated as follows. Inhibited by UTP. Catalyzes the reversible phosphorylation of UMP to UDP. The protein is Uridylate kinase of Thiobacillus denitrificans (strain ATCC 25259 / T1).